A 303-amino-acid chain; its full sequence is tRNA dimethylallyltransferase (303 aa).

9–16 (GPTASGKS) is an ATP binding site. A substrate-binding site is contributed by 11–16 (TASGKS). The interaction with substrate tRNA stretch occupies residues 34-37 (DSKQ).

Belongs to the IPP transferase family. As to quaternary structure, monomer. It depends on Mg(2+) as a cofactor.

It carries out the reaction adenosine(37) in tRNA + dimethylallyl diphosphate = N(6)-dimethylallyladenosine(37) in tRNA + diphosphate. Functionally, catalyzes the transfer of a dimethylallyl group onto the adenine at position 37 in tRNAs that read codons beginning with uridine, leading to the formation of N6-(dimethylallyl)adenosine (i(6)A). The chain is tRNA dimethylallyltransferase from Ehrlichia chaffeensis (strain ATCC CRL-10679 / Arkansas).